The following is a 500-amino-acid chain: Maturase K (500 aa).

This sequence belongs to the intron maturase 2 family. MatK subfamily.

It localises to the plastid. Its subcellular location is the chloroplast. In terms of biological role, usually encoded in the trnK tRNA gene intron. Probably assists in splicing its own and other chloroplast group II introns. The sequence is that of Maturase K from Helianthus annuus (Common sunflower).